Reading from the N-terminus, the 103-residue chain is Large ribosomal subunit protein eL14 (103 aa).

It belongs to the eukaryotic ribosomal protein eL14 family.

In Pyrobaculum calidifontis (strain DSM 21063 / JCM 11548 / VA1), this protein is Large ribosomal subunit protein eL14.